The chain runs to 481 residues: MASLDISDPDITKYIKLVQDGNPANRWIVFSYVPKSNNKIKFCDSGSGDLKELREELDDSSIRFAYIRFVINNMPKFVYIPWCGDGVNGPIKGAFSGHAIEFSKSFKPIHHQVNARSEEDIDEKAITAALNKATGASYDSGSKVQGATKGTFIPQSVSQGREAATKSNAEVKNVINKNDYNKIQESAEYWKQNQANKSEPAKPTRPEYNLSTERDDYWKQQQAEKQKQQQQQQQQQASRVNAPPPSRTVGNKFQEQVSKPTETAPPQPRPAPSKGSVLNRFPAATQQQQEPPAPSRPAAPVPSRVNKPAAPVQPVYQEPVHEEPQYEEPQYEEEQQQQYEEQPTEEQQYYQEEPQQQYEEQPTEEQQYYQEEQQQYEEQPTEEQQYYQEEQQQYEQPTEDQQYYQEEQQQYEQPAEEQYDQSGYLQAKALYDYNGENDGDLSFREGDIITILDQSDPDGWWQGSLPTGEQGFFPSNFVQQL.

Positions 3 to 131 (SLDISDPDIT…DEKAITAALN (129 aa)) constitute an ADF-H domain. The segment covering 217 to 227 (YWKQQQAEKQK) has biased composition (basic and acidic residues). The tract at residues 217-423 (YWKQQQAEKQ…PAEEQYDQSG (207 aa)) is disordered. Residues 228-237 (QQQQQQQQQA) are compositionally biased toward low complexity. Residues 248-261 (TVGNKFQEQVSKPT) are compositionally biased toward polar residues. The span at 291–300 (PPAPSRPAAP) shows a compositional bias: pro residues. The segment covering 325–335 (QYEEPQYEEEQ) has biased composition (acidic residues). Residues 336-413 (QQQYEEQPTE…YQEEQQQYEQ (78 aa)) are compositionally biased toward low complexity. An SH3 domain is found at 422–481 (SGYLQAKALYDYNGENDGDLSFREGDIITILDQSDPDGWWQGSLPTGEQGFFPSNFVQQL).

Belongs to the ABP1 family.

The protein resides in the cytoplasm. It localises to the cytoskeleton. Its subcellular location is the cell projection. It is found in the pseudopodium. Its function is as follows. Actin-binding adapter protein. Binds to F-actin but is not involved in actin polymerization, capping or bundling. Does not bind G-actin. Controls pseudopodium number and motility in early stages of chemotactic aggregation. The polypeptide is Drebrin-like protein (abpE-1) (Dictyostelium discoideum (Social amoeba)).